The following is a 721-amino-acid chain: MTPIQKTATVGGKDILLETGKVAKQAHGSVWVRLGDSIVLVTAVSAAEKKEGIDFFPLTVDYQEKLFAAGRVPGSFFRREGRPTEKETLTSRLVDRSCRPLFAEGYSNETQVIATVISFDQENDTDVLALTGASAALHISDIPFGGPIAGVRVARVGGQLVANPTLAQRAEADLDVVMAASRDAIVMVEGGAQEVSEAVMIEALLFGQAAVQPLLDAQDALRAATGNKARRSFDPPKNDVELRAKVKALTWEKVKEAYGRNEKHDRYGRLSEIKKELLQALKDEAAGDAAKLATIALREKEIKGYYEDVKYDYMRKMITDERRRIGGRGMADIRKITCEVGLLPRVHGSSLFTRGETQALVATTLGTAEDEQRVEMLTGMVFKKFMLHYNFPPFSVGEVKFLRSPGRREIGHGALAERALRAVMPPEDQFPYTVRVVSDIMESNGSSSMASVCGGCLSLMDAGVPIKAPVAGIAMGLIKEGEKIAILSDILGDEDHLGDMDFKVCGTAAGITSIQMDIKIGGVTRDILEQALAQAAEGRKHILGEMAKALSAPRGSISAYAPRITTIKIRPERIKDIIGPGGKTIKDITARTGTSINIEDDGSVSIASPNQDKVEEAIKMIRGLTQEAEVGRIYLGTVRKIAEFGAFVEIFPGTDGLIHISELSDKRVKSVSDVLSEGEEVMVKVISVDRSGKIRLSRKEALADSAKKSEGTEPPKGEPAK.

Mg(2+)-binding residues include aspartate 495 and aspartate 501. Residues 562–621 form the KH domain; it reads PRITTIKIRPERIKDIIGPGGKTIKDITARTGTSINIEDDGSVSIASPNQDKVEEAIKMI. An S1 motif domain is found at 631 to 699; the sequence is GRIYLGTVRK…RSGKIRLSRK (69 aa). Residues 699-721 form a disordered region; sequence KEALADSAKKSEGTEPPKGEPAK.

It belongs to the polyribonucleotide nucleotidyltransferase family. It depends on Mg(2+) as a cofactor.

The protein localises to the cytoplasm. The enzyme catalyses RNA(n+1) + phosphate = RNA(n) + a ribonucleoside 5'-diphosphate. Functionally, involved in mRNA degradation. Catalyzes the phosphorolysis of single-stranded polyribonucleotides processively in the 3'- to 5'-direction. This chain is Polyribonucleotide nucleotidyltransferase, found in Anaeromyxobacter sp. (strain K).